The chain runs to 595 residues: Phytoene desaturase (595 aa).

The N-terminal stretch at 1–23 is a signal peptide; that stretch reads MAETQRPRSAIIVGAGAGGIAVA. A helical transmembrane segment spans residues 574–594; that stretch reads SQRAFPLLVALMGVLYFLLFV.

The protein belongs to the carotenoid/retinoid oxidoreductase family. NAD(+) is required as a cofactor.

Its subcellular location is the membrane. The enzyme catalyses 15-cis-phytoene + A = all-trans-phytofluene + AH2. The catalysed reaction is all-trans-phytofluene + A = all-trans-zeta-carotene + AH2. It catalyses the reaction all-trans-zeta-carotene + A = all-trans-neurosporene + AH2. It carries out the reaction all-trans-neurosporene + A = all-trans-lycopene + AH2. The enzyme catalyses all-trans-lycopene + A = all-trans-3,4-didehydrolycopene + AH2. It functions in the pathway carotenoid biosynthesis; lycopene biosynthesis. Its function is as follows. Phytoene desaturase involved in the carotenoid biosynthesis pathway. Converts phytoene into 3,4-didehydrolycopene via the intermediates phytofluene, zeta-carotene, neurosporene and lycopene, by introducing up to five double bonds into phytoene. Is also able to desaturate 1-hydroxyneurosporene into 1-hydroxylycopene and 1-hydroxylycopene into 1-hydroxy-3,4-didehydrolycopene. Gamma-carotene and 1,19-dihydroxylycopene are not accepted as substrates. Neurosporaxanthin is synthesized from geranyl-geranyl pyrophosphate (GGPP) through several enzymatic activities. Phytoene synthase activity performed by the bifunctional enzyme al-2 first produces phytoene from geranyl-geranyl pyrophosphate (GGPP). The phytoene dehydrogenase al-1 then introduces 5 desaturations to lead to 3,4-didehydrolycopene via the intermediates phytofluene, zeta-carotene, neurosporene and lycopene. Al-2 cyclase activity then converts 3,4-didehydrolycopene into torulene. Al-2 can also convet lycopene into gamma-carotene which in turn is converted to beta-carotene by an additional al-2 cyclization reaction. Torulene is the substrate of the dioxidase cao-2 that breaks the molecule, removing five carbon atoms to yield beta-apo-4'-carotenal, whereas the aldehyde dehydrogenase ylo-1 mediates the last step by converting beta-apo-4'-carotenal into neurosporaxanthin. The protein is Phytoene desaturase of Neurospora crassa (strain ATCC 24698 / 74-OR23-1A / CBS 708.71 / DSM 1257 / FGSC 987).